The following is a 392-amino-acid chain: tRNA (guanine(26)-N(2)/guanine(27)-N(2))-dimethyltransferase (392 aa).

In terms of domain architecture, Trm1 methyltransferase spans 2–375; sequence EIVQEGIAKI…LSFEEVMKKM (374 aa). Residues Arg-36, Arg-66, Asp-84, Glu-113, and Ala-114 each coordinate S-adenosyl-L-methionine. Zn(2+) contacts are provided by Cys-247, Cys-250, Cys-266, and Cys-269.

It belongs to the class I-like SAM-binding methyltransferase superfamily. Trm1 family.

It carries out the reaction guanosine(26)/guanosine(27) in tRNA + 4 S-adenosyl-L-methionine = N(2)-dimethylguanosine(26)/N(2)-dimethylguanosine(27) in tRNA + 4 S-adenosyl-L-homocysteine + 4 H(+). Its function is as follows. Dimethylates the guanine residues at position 26 and 27 of one or more tRNAs using S-adenosyl-L-methionine as donor of the methyl groups. The chain is tRNA (guanine(26)-N(2)/guanine(27)-N(2))-dimethyltransferase from Aquifex aeolicus (strain VF5).